The sequence spans 293 residues: Glycine N-methyltransferase (293 aa).

The residue at position 2 (Val-2) is an N-acetylvaline. (6S)-5-methyl-5,6,7,8-tetrahydrofolate-binding residues include Ser-4 and Tyr-6. Ser-10 carries the phosphoserine modification. The S-adenosyl-L-methionine site is built by Tyr-22, Trp-31, Tyr-34, and Arg-41. Tyr-34 bears the Phosphotyrosine mark. At Lys-46 the chain carries N6-succinyllysine. S-adenosyl-L-methionine is bound by residues Ala-65, 86–88, 117–118, 137–140, and Arg-176; these read DAS, NW, and LGNS. N6-succinyllysine occurs at positions 191, 196, and 201. His-215 is a binding site for (6S)-5-methyl-5,6,7,8-tetrahydrofolate. Tyr-221 provides a ligand contact to S-adenosyl-L-methionine. Arg-240 is a (6S)-5-methyl-5,6,7,8-tetrahydrofolate binding site.

The protein belongs to the class I-like SAM-binding methyltransferase superfamily. Glycine N-methyltransferase family. As to quaternary structure, homotetramer. Abundant in liver.

The protein resides in the cytoplasm. The enzyme catalyses glycine + S-adenosyl-L-methionine = sarcosine + S-adenosyl-L-homocysteine + H(+). With respect to regulation, inhibited by 5-methyltetrahydrofolate monoglutamate and by 5-methyltetrahydrofolate pentaglutamate, inhibition is much more effective by the pentaglutamate form than by the monoglutamate form. Two molecules of 5-methyltetrahydrofolate are bound per tetramer. The binding sites are localized between subunits. Inhibitor binding may preclude movements of the polypeptide chain that are necessary for enzyme activity. Functionally, catalyzes the methylation of glycine by using S-adenosylmethionine (AdoMet) to form N-methylglycine (sarcosine) with the concomitant production of S-adenosylhomocysteine (AdoHcy), a reaction regulated by the binding of 5-methyltetrahydrofolate. Possible crucial role in the regulation of tissue concentration of AdoMet and of metabolism of methionine. The polypeptide is Glycine N-methyltransferase (Gnmt) (Rattus norvegicus (Rat)).